The following is a 431-amino-acid chain: Adenylosuccinate synthetase (431 aa).

GTP contacts are provided by residues glycine 13–lysine 19 and glycine 41–threonine 43. Aspartate 14 (proton acceptor) is an active-site residue. 2 residues coordinate Mg(2+): aspartate 14 and glycine 41. IMP contacts are provided by residues aspartate 14–lysine 17, asparagine 39–histidine 42, threonine 130, arginine 144, glutamine 225, threonine 240, and arginine 304. Histidine 42 acts as the Proton donor in catalysis. Alanine 300–arginine 306 contacts substrate. Residues arginine 306, lysine 332 to aspartate 334, and serine 415 to glycine 417 contribute to the GTP site.

This sequence belongs to the adenylosuccinate synthetase family. As to quaternary structure, homodimer. The cofactor is Mg(2+).

It is found in the cytoplasm. The catalysed reaction is IMP + L-aspartate + GTP = N(6)-(1,2-dicarboxyethyl)-AMP + GDP + phosphate + 2 H(+). Its pathway is purine metabolism; AMP biosynthesis via de novo pathway; AMP from IMP: step 1/2. Functionally, plays an important role in the de novo pathway of purine nucleotide biosynthesis. Catalyzes the first committed step in the biosynthesis of AMP from IMP. This chain is Adenylosuccinate synthetase, found in Shewanella piezotolerans (strain WP3 / JCM 13877).